A 472-amino-acid chain; its full sequence is Cysteine--tRNA ligase (472 aa).

Cys-28 serves as a coordination point for Zn(2+). Residues Pro-30–Asn-40 carry the 'HIGH' region motif. Residues Cys-212, His-237, and Glu-241 each contribute to the Zn(2+) site. The 'KMSKS' region signature appears at Lys-271–Ser-275. Lys-274 lines the ATP pocket.

Belongs to the class-I aminoacyl-tRNA synthetase family. As to quaternary structure, monomer. Requires Zn(2+) as cofactor.

Its subcellular location is the cytoplasm. The enzyme catalyses tRNA(Cys) + L-cysteine + ATP = L-cysteinyl-tRNA(Cys) + AMP + diphosphate. The sequence is that of Cysteine--tRNA ligase from Limosilactobacillus fermentum (strain NBRC 3956 / LMG 18251) (Lactobacillus fermentum).